The sequence spans 1402 residues: MNGNSKVHTEENKNEHQQEGKGGEQEQEQINKHINKDTINNNNNNNNSMSMEMDINSVSVNSLSEPTPNEQQNNNNNNNSNGNGNGNDETTSSKTTTIINSNPLDTDTIMHLNNNDSSNNTTTTTIPRQSSSSIQNGIHKEENINQLTEIQLQPSLQIMDKEQQMNGIEESTTIATQTTLPTNNNNNNNNNNNNNNNNNNNNNNILEKESNGVQEIEDSPNHLSLKRKLMILEEMGLISDDNNKNNNNNSIDIPNSNRLNQIPSSYKTSLYICLYPIGYAIDNIYKDKIFTYNDKISKDFLNSISQGKLTPYIINILDQLSEQNDQKQQQQQQQQQQQQQQQQQQQQQQQQQQQTNNIYQNSNEITYYNGCIVVNIKDYRGFAENEQIAKTFNSKNMKPYPITVPIGTFKEFIEKRIILKPTMESLLFDIKKNCSTLNNDNKNNNINNINNINNNNNNNNNNNNNNNNNININNNNNINNYLNIKESEIVNEEYLLNFEKCLLHAITPQLELSVNPNCFFDQLETKQKQLYNQSHSLFSYKRFKPSDFIGLKYPVVYNNNNNNNNNNNKSYNNISNNNNNNVSNRFIKTHSISNIQERQQVNNNDLSTISTQQSPPTLIQTSAKRSIITLNTQINTTNSCLPNDNFSLFKFLNSNPKWVNERKSMLQYHSNINQTQSFPFNYQFNNNNNNNNNIPVNNNNNNVITQPPFGNGINTFSIKPSIMTKIPIECEQLNGRLLQFFSTSNLTVLTFECKAKPTGYELLMYVSETTQVLNTLISLRNLKFTAPSTSTSSSSSSGGTTTTTTATGTTPTTPTPVPLTQQQLIQQLISFSLNKPILPLNQQSPLAEASYVLDTQLPQPTYLSFPIGNSKQAHFLINHMKSCIEHEGHYILSYDSSFPDTISSQAQEIRKKAEYIHNQQQLNQQQQLQYHLQQQKQQQQQQQQQQQQQNQQQQQQNQQQQQNQQNQQQNQQQNQQQNQQQQQQQNQQNQQNQQNQQQNQQQQQQQNQQQQQNQQTQQQQTQQQIQQNQQQPTQQIQQQNQQQIQQNQQQLQQQQLQQQQQQIQQQQIQLQQQQIQQKQLQQLQQQQQQQQQQQQQQQQQQQQQQQQQQQQQQQQQQQQQQQQQQQQLQQTRNLQPQQIQTQPLQQPPNQMAQSMISPQSTPSTSPSPQQQYQTTPVLQAGVQPQSQLTIKQPIQQPLQPLQQPQPQPQQQQQQQQQQPPQPQPQPQQFAQHLQQQQMQRPQAQLQPPQILQQLQQQQQQQQQQLQPPQILQQQYQTLQPQQLILQQQIHEKQNIHQQMLLQQQRNQTNLQLLQQQAQQIPPNNPQLLQTNQQQQQFVTQQIQHQHQQLLQSQSIIQQLQLQLHQQQQLQQLQAQLQQQTSPNIIQQQQQQQQQQQQQQRIN.

7 disordered regions span residues Met1–Gln29, Val60–Asp107, Asn114–Ser133, Gln177–Leu206, Ala786–Val817, Pro1136–Thr1174, and Gln1199–Ile1250. Positions Val7 to Gln29 are enriched in basic and acidic residues. A compositionally biased stretch (polar residues) spans Val60–Gln72. Positions Asn73–Asn102 are enriched in low complexity. Composition is skewed to low complexity over residues Asn183 to Asn204, Ala786 to Thr812, Pro1136 to Gln1150, Ser1157 to Thr1174, Gln1199 to Gln1218, and Pro1226 to Ile1250.

This sequence belongs to the SPT20 family.

In Dictyostelium discoideum (Social amoeba), this protein is Transcription factor SPT20 homolog.